Consider the following 167-residue polypeptide: Putative N-acetylgalactosamine-6-phosphate deacetylase (167 aa).

Belongs to the metallo-dependent hydrolases superfamily. NagA family.

The enzyme catalyses N-acetyl-D-galactosamine 6-phosphate + H2O = D-galactosamine 6-phosphate + acetate. This Escherichia coli (strain K12) protein is Putative N-acetylgalactosamine-6-phosphate deacetylase (agaA).